The primary structure comprises 341 residues: Undecaprenyl-phosphate 4-deoxy-4-formamido-L-arabinose transferase (341 aa).

The next 2 membrane-spanning stretches (helical) occupy residues Leu-235–Val-255 and Leu-269–Leu-289.

Belongs to the glycosyltransferase 2 family.

It localises to the cell inner membrane. It catalyses the reaction UDP-4-deoxy-4-formamido-beta-L-arabinose + di-trans,octa-cis-undecaprenyl phosphate = 4-deoxy-4-formamido-alpha-L-arabinopyranosyl di-trans,octa-cis-undecaprenyl phosphate + UDP. It participates in glycolipid biosynthesis; 4-amino-4-deoxy-alpha-L-arabinose undecaprenyl phosphate biosynthesis; 4-amino-4-deoxy-alpha-L-arabinose undecaprenyl phosphate from UDP-4-deoxy-4-formamido-beta-L-arabinose and undecaprenyl phosphate: step 1/2. It functions in the pathway bacterial outer membrane biogenesis; lipopolysaccharide biosynthesis. Functionally, catalyzes the transfer of 4-deoxy-4-formamido-L-arabinose from UDP to undecaprenyl phosphate. The modified arabinose is attached to lipid A and is required for resistance to polymyxin and cationic antimicrobial peptides. This chain is Undecaprenyl-phosphate 4-deoxy-4-formamido-L-arabinose transferase, found in Pseudomonas fluorescens (strain SBW25).